A 113-amino-acid polypeptide reads, in one-letter code: Hydrogenase maturation factor HypA (113 aa).

H2 is a Ni(2+) binding site. Positions 73, 76, 89, and 92 each coordinate Zn(2+).

It belongs to the HypA/HybF family.

In terms of biological role, involved in the maturation of [NiFe] hydrogenases. Required for nickel insertion into the metal center of the hydrogenase. The protein is Hydrogenase maturation factor HypA of Prosthecochloris aestuarii (strain DSM 271 / SK 413).